Reading from the N-terminus, the 205-residue chain is ATP-dependent Clp protease proteolytic subunit (205 aa).

S98 (nucleophile) is an active-site residue. H123 is a catalytic residue.

Belongs to the peptidase S14 family. In terms of assembly, fourteen ClpP subunits assemble into 2 heptameric rings which stack back to back to give a disk-like structure with a central cavity, resembling the structure of eukaryotic proteasomes.

The protein localises to the cytoplasm. It carries out the reaction Hydrolysis of proteins to small peptides in the presence of ATP and magnesium. alpha-casein is the usual test substrate. In the absence of ATP, only oligopeptides shorter than five residues are hydrolyzed (such as succinyl-Leu-Tyr-|-NHMec, and Leu-Tyr-Leu-|-Tyr-Trp, in which cleavage of the -Tyr-|-Leu- and -Tyr-|-Trp bonds also occurs).. Cleaves peptides in various proteins in a process that requires ATP hydrolysis. Has a chymotrypsin-like activity. Plays a major role in the degradation of misfolded proteins. The chain is ATP-dependent Clp protease proteolytic subunit from Desulfosudis oleivorans (strain DSM 6200 / JCM 39069 / Hxd3) (Desulfococcus oleovorans).